The chain runs to 131 residues: T3C protein (131 aa).

This Ovis aries (Sheep) protein is T3C protein.